Here is a 422-residue protein sequence, read N- to C-terminus: MELENKLKKVTLGHEEGFGAPCLKCKEKCEGFELHFWRKVCRNCKCGQEEHSILSNNEDDRKVGKLFEDTKYTALIAKLKTDGIPTYKRNVMILTSPVAAKKDVSINTVTYEWAPPVQNQALARRYMELIPKDKQPVAGSEGAQYRKKQLAKQLPAHDQDPSKCHELSPNEVKQMEQFVKKYKNEVLGVGDVKLPKEVEAQACGAGRSTNGSLSTLTTVKGTEDKVAAQKESTYYCFRCKENMREGDPAVYAERAGYDKLWHPSCFVCFTCNELLVDMIYFWKNGKLYCGRHYCDSEKPRCAGCDELIFSNEYTQAEGLNWHLKHFCCFDCDCVLAGEIYVMVNDKPVCKLCYVKNHAVSCQGCHNAIDPEVQRVSYNGFHWHAAPECFICSCCSKCLIGQKFMPIQGMVFCSVDCKKKMSS.

One can recognise a PET domain in the interval 92-199 (MILTSPVAAK…GDVKLPKEVE (108 aa)). Residues 135–165 (QPVAGSEGAQYRKKQLAKQLPAHDQDPSKCH) form a disordered region. The segment covering 155–165 (PAHDQDPSKCH) has biased composition (basic and acidic residues). LIM zinc-binding domains are found at residues 234 to 299 (YYCF…SEKP), 300 to 359 (RCAG…NHAV), and 360 to 422 (SCQG…KMSS).

Belongs to the prickle / espinas / testin family.

Its subcellular location is the cytoplasm. The protein localises to the cell cortex. It localises to the cell junction. It is found in the focal adhesion. Scaffold protein that may play a role in cell adhesion, cell spreading and in the reorganization of the actin cytoskeleton. May inhibit cell growth. Regulates cranial neural crest migration. Acts together with prickle1 to control axial elongation. The sequence is that of Testin from Xenopus tropicalis (Western clawed frog).